Here is a 369-residue protein sequence, read N- to C-terminus: Phosphoserine aminotransferase (369 aa).

Position 42 (R42) interacts with L-glutamate. Residues W101, T152, D176, and Q199 each contribute to the pyridoxal 5'-phosphate site. K200 is subject to N6-(pyridoxal phosphate)lysine. Residue 241 to 242 participates in pyridoxal 5'-phosphate binding; that stretch reads NT.

Belongs to the class-V pyridoxal-phosphate-dependent aminotransferase family. SerC subfamily. Homodimer. The cofactor is pyridoxal 5'-phosphate.

The protein localises to the cytoplasm. The catalysed reaction is O-phospho-L-serine + 2-oxoglutarate = 3-phosphooxypyruvate + L-glutamate. It catalyses the reaction 4-(phosphooxy)-L-threonine + 2-oxoglutarate = (R)-3-hydroxy-2-oxo-4-phosphooxybutanoate + L-glutamate. It participates in amino-acid biosynthesis; L-serine biosynthesis; L-serine from 3-phospho-D-glycerate: step 2/3. It functions in the pathway cofactor biosynthesis; pyridoxine 5'-phosphate biosynthesis; pyridoxine 5'-phosphate from D-erythrose 4-phosphate: step 3/5. Catalyzes the reversible conversion of 3-phosphohydroxypyruvate to phosphoserine and of 3-hydroxy-2-oxo-4-phosphonooxybutanoate to phosphohydroxythreonine. This Delftia acidovorans (strain DSM 14801 / SPH-1) protein is Phosphoserine aminotransferase.